The primary structure comprises 852 residues: DNA mismatch repair protein MutS (852 aa).

602–609 (GPNMSGKS) serves as a coordination point for ATP.

It belongs to the DNA mismatch repair MutS family.

In terms of biological role, this protein is involved in the repair of mismatches in DNA. It is possible that it carries out the mismatch recognition step. This protein has a weak ATPase activity. The polypeptide is DNA mismatch repair protein MutS (Streptococcus thermophilus (strain ATCC BAA-491 / LMD-9)).